The chain runs to 210 residues: Stress-response A/B barrel domain-containing protein DABB1 (210 aa).

Stress-response A/B barrel domains follow at residues 5 to 100 and 116 to 204; these read VEHV…AVDW and IGKI…VVEF.

Homodimer.

It localises to the cytoplasm. The protein resides in the cytosol. Functionally, involved in defense against fungal pathogens. Possesses antifungal activity against diverse pathogenic fungi. In Arabidopsis thaliana (Mouse-ear cress), this protein is Stress-response A/B barrel domain-containing protein DABB1.